A 319-amino-acid polypeptide reads, in one-letter code: Thioredoxin reductase (319 aa).

36 to 48 (EGFMAGGVAAGGQ) contributes to the FAD binding site. Residues Cys144 and Cys147 are joined by a disulfide bond. 289–298 (DVQDKVYRQA) lines the FAD pocket.

Belongs to the class-II pyridine nucleotide-disulfide oxidoreductase family. Homodimer. It depends on FAD as a cofactor.

It catalyses the reaction [thioredoxin]-dithiol + NADP(+) = [thioredoxin]-disulfide + NADPH + H(+). This Dictyostelium discoideum (Social amoeba) protein is Thioredoxin reductase (trrA).